Here is a 217-residue protein sequence, read N- to C-terminus: MSIAALIDHTLLAPDVTAQHIRTLCREAVDHGFATVCVSPTRVRLAADELAGHAPRVCSVIGFPSGAHLSEIRAAETKAAVNDGADEIDMVINVGAVKDDDWDTVESDISAVVDAAGMAIVKVILEVSELTDEEITRACQAAERCGADFVKTSTGYSRHGATAEAVSLMRRTVGDRLGVKASGGIRTHNDVATMLRAGATRIGASAGVALLVDEEAL.

The Proton donor/acceptor role is filled by D89. K151 functions as the Schiff-base intermediate with acetaldehyde in the catalytic mechanism. K180 functions as the Proton donor/acceptor in the catalytic mechanism.

The protein belongs to the DeoC/FbaB aldolase family. DeoC type 1 subfamily.

The protein localises to the cytoplasm. It catalyses the reaction 2-deoxy-D-ribose 5-phosphate = D-glyceraldehyde 3-phosphate + acetaldehyde. Its pathway is carbohydrate degradation; 2-deoxy-D-ribose 1-phosphate degradation; D-glyceraldehyde 3-phosphate and acetaldehyde from 2-deoxy-alpha-D-ribose 1-phosphate: step 2/2. Catalyzes a reversible aldol reaction between acetaldehyde and D-glyceraldehyde 3-phosphate to generate 2-deoxy-D-ribose 5-phosphate. This Cutibacterium acnes (strain DSM 16379 / KPA171202) (Propionibacterium acnes) protein is Deoxyribose-phosphate aldolase 1.